A 320-amino-acid polypeptide reads, in one-letter code: Olfactory receptor 51E2 (320 aa).

The Extracellular segment spans residues 1-27; sequence MSSCNFTHATFLLIGIPGLEEAHFWFG. Residue Asn-5 is glycosylated (N-linked (GlcNAc...) asparagine). The chain crosses the membrane as a helical span at residues 28 to 48; the sequence is FPLLSMYAVALFGNCIVVFIV. Residues 49-53 lie on the Cytoplasmic side of the membrane; sequence RTERS. Residues 54 to 74 form a helical membrane-spanning segment; it reads LHAPMYLFLCMLAAIDLALST. Topologically, residues 75–98 are extracellular; that stretch reads STMPKILALFWFDSREITFDACLA. A disulfide bridge links Cys-96 with Cys-178. The helical transmembrane segment at 99–119 threads the bilayer; it reads QMFFIHTLSAIESTILLAMAF. Residues 120–141 are Cytoplasmic-facing; the sequence is DRYVAICHPLRHAAVLNNTVTV. Residues 142–162 traverse the membrane as a helical segment; that stretch reads QIGMVALVRGSLFFFPLPLLI. Topologically, residues 163 to 200 are extracellular; that stretch reads KRLAFCHSNVLSHSYCVHQDVMKLAYTDTLPNVVYGLT. Residues 201-221 form a helical membrane-spanning segment; the sequence is AILLVMGVDVMFISLSYFLII. Residues 222 to 239 are Cytoplasmic-facing; that stretch reads RTVLQLPSKSERAKAFGT. A helical membrane pass occupies residues 240–260; it reads CVSHISVVLAFYVPLIGLSVV. At 261 to 269 the chain is on the extracellular side; the sequence is HRFGNSLDP. The chain crosses the membrane as a helical span at residues 270–290; that stretch reads IVHVLMGDVYLLLPPVINPII. At 291-320 the chain is on the cytoplasmic side; the sequence is YGAKTKQIRTRVLAMFKISCDKDIEAGGNT.

Belongs to the G-protein coupled receptor 1 family. In brain, expressed in medulla oblongata by cells close to the fourth ventricle, in the area postrema, the nucleus tractus solitarius. Expressed in olfactory epithelium and vomeronasal organ. Expressed in kidney by large renal vessels, renal afferent arterioles, and extrarenal vascular beds. In small resistance vessels the expression is restricted to cells of the juxtaglomerular afferent arteriole, which mediate renin secretion. Also detected in small blood vessels in a variety of tissues including heart, diaphragm, skeletal muscle, and skin. In the heart, esophagus, and stomach it is detected in axons of autonomic neurons and neurons of the enteric plexus. Also detected in colon and liver. Expressed in the glomus cells of the carotid body.

Its subcellular location is the cell membrane. It is found in the early endosome membrane. Functionally, olfactory receptor. The activity of this receptor is probably mediated by G-proteins which induce elevation of intracellular Ca(2+), cAMP and activation of phosphorylation of the protein kinases PKA and MAPK3/MAPK1. Activation of OR51E2 may affect melanocyte proliferation, differentiation, and melanogenesis and may increase proliferation and migration of primary retinal pigment epithelial (RPE) cells. Activated by the short chain fatty acids (SCFA), acetate and propionate. In response to SCFA, may positively regulate renin secretion and increase blood pressure. May also be activated by steroid hormones and regulate cell proliferation. Activated by L-lactate in glomus cells. The polypeptide is Olfactory receptor 51E2 (Or51e2) (Mus musculus (Mouse)).